Here is a 70-residue protein sequence, read N- to C-terminus: Conotoxin AbVIC (70 aa).

The first 17 residues, valine 1 to alanine 17, serve as a signal peptide directing secretion. Positions glutamate 18 to arginine 41 are excised as a propeptide. Residues threonine 19–arginine 41 form a disordered region. 3 disulfides stabilise this stretch: cysteine 43/cysteine 57, cysteine 50/cysteine 61, and cysteine 56/cysteine 68.

It belongs to the conotoxin O1 superfamily. Expressed by the venom duct.

The protein resides in the secreted. The polypeptide is Conotoxin AbVIC (Conus abbreviatus (Abbreviated cone)).